A 280-amino-acid chain; its full sequence is Phosphonates import ATP-binding protein PhnC (280 aa).

An ABC transporter domain is found at 2–245 (FELKNVTRRF…AVKEIYGTDK (244 aa)). An ATP-binding site is contributed by 34–41 (GRSGAGKS). Residues 257–280 (TSLESKRRAEDVSSGRVAKAAAVH) form a disordered region. Residues 260–269 (ESKRRAEDVS) are compositionally biased toward basic and acidic residues.

The protein belongs to the ABC transporter superfamily. Phosphonates importer (TC 3.A.1.9.1) family. The complex is composed of two ATP-binding proteins (PhnC), two transmembrane proteins (PhnE) and a solute-binding protein (PhnD).

Its subcellular location is the cell inner membrane. The catalysed reaction is phosphonate(out) + ATP + H2O = phosphonate(in) + ADP + phosphate + H(+). Functionally, part of the ABC transporter complex PhnCDE involved in phosphonates import. Responsible for energy coupling to the transport system. The chain is Phosphonates import ATP-binding protein PhnC from Rhizobium johnstonii (strain DSM 114642 / LMG 32736 / 3841) (Rhizobium leguminosarum bv. viciae).